The chain runs to 1146 residues: ATP-dependent helicase/deoxyribonuclease subunit B (1146 aa).

The UvrD-like helicase ATP-binding domain maps to 1–280; sequence MSLRFIYGRA…LNSKPLFRFS (280 aa). 8-15 provides a ligand contact to ATP; the sequence is GRAGSGKT. The 309-residue stretch at 276 to 584 folds into the UvrD-like helicase C-terminal domain; it reads LFRFSQSPEL…LVGSLERSRS (309 aa). The [4Fe-4S] cluster site is built by cysteine 786, cysteine 1105, cysteine 1108, and cysteine 1114.

It belongs to the helicase family. AddB/RexB type 1 subfamily. As to quaternary structure, heterodimer of AddA and AddB. Mg(2+) is required as a cofactor. It depends on [4Fe-4S] cluster as a cofactor.

Its function is as follows. The heterodimer acts as both an ATP-dependent DNA helicase and an ATP-dependent, dual-direction single-stranded exonuclease. Recognizes the chi site generating a DNA molecule suitable for the initiation of homologous recombination. The AddB subunit has 5' -&gt; 3' nuclease activity but not helicase activity. This is ATP-dependent helicase/deoxyribonuclease subunit B from Acetivibrio thermocellus (strain ATCC 27405 / DSM 1237 / JCM 9322 / NBRC 103400 / NCIMB 10682 / NRRL B-4536 / VPI 7372) (Clostridium thermocellum).